The chain runs to 468 residues: 3-isopropylmalate dehydratase large subunit (468 aa).

Positions 349, 409, and 412 each coordinate [4Fe-4S] cluster.

The protein belongs to the aconitase/IPM isomerase family. LeuC type 1 subfamily. Heterodimer of LeuC and LeuD. [4Fe-4S] cluster is required as a cofactor.

The enzyme catalyses (2R,3S)-3-isopropylmalate = (2S)-2-isopropylmalate. Its pathway is amino-acid biosynthesis; L-leucine biosynthesis; L-leucine from 3-methyl-2-oxobutanoate: step 2/4. Its function is as follows. Catalyzes the isomerization between 2-isopropylmalate and 3-isopropylmalate, via the formation of 2-isopropylmaleate. In Roseobacter denitrificans (strain ATCC 33942 / OCh 114) (Erythrobacter sp. (strain OCh 114)), this protein is 3-isopropylmalate dehydratase large subunit.